The chain runs to 175 residues: Small ribosomal subunit protein uS9 (175 aa).

This sequence belongs to the universal ribosomal protein uS9 family.

This Streptomyces griseus subsp. griseus (strain JCM 4626 / CBS 651.72 / NBRC 13350 / KCC S-0626 / ISP 5235) protein is Small ribosomal subunit protein uS9.